The primary structure comprises 162 residues: V-type proton ATPase subunit c' (162 aa).

At 1–11 (MSSNLCPIYSS) the chain is on the lumenal side. A helical membrane pass occupies residues 12–32 (FFGFAGVCASMVFSCLGAGYG). Residues 33 to 54 (TALAGRGIAAVGAFRPEIVMKS) are Cytoplasmic-facing. The chain crosses the membrane as a helical span at residues 55-75 (LIPVVMSGIIGVYGLVMSVLI). Over 76 to 93 (AGDMSPDNDYSLFSGFIH) the chain is Lumenal. A helical transmembrane segment spans residues 94–114 (LSAGLAVGLTGVAAGYAIGVV). At 115-132 (GDRGVQSFMRQDRIFVSM) the chain is on the cytoplasmic side. Residues 133-153 (VLILIFAEVLGLYGLIVGLIL) form a helical membrane-spanning segment. At 154–162 (QTKTSNVCY) the chain is on the lumenal side.

Belongs to the V-ATPase proteolipid subunit family. V-ATPase is a heteromultimeric enzyme composed of a peripheral catalytic V1 complex (components A to H) attached to an integral membrane V0 proton pore complex (components: a, c, c', c'', d, e, f and VOA1). The decameric c-ring forms the proton-conducting pore, and is composed of eight proteolipid subunits c, one subunit c' and one subunit c''.

The protein localises to the vacuole membrane. Proton-conducting pore forming subunit of the V0 complex of vacuolar(H+)-ATPase (V-ATPase), a multisubunit enzyme composed of a peripheral complex (V1) that hydrolyzes ATP and a membrane integral complex (V0) that translocates protons. V-ATPase is responsible for acidifying and maintaining the pH of intracellular compartments. The sequence is that of V-type proton ATPase subunit c' from Schizosaccharomyces pombe (strain 972 / ATCC 24843) (Fission yeast).